The following is a 216-amino-acid chain: Pyrophosphatase PpaX (216 aa).

The active-site Nucleophile is Asp12.

This sequence belongs to the HAD-like hydrolase superfamily. PpaX family. Mg(2+) serves as cofactor.

It carries out the reaction diphosphate + H2O = 2 phosphate + H(+). In terms of biological role, hydrolyzes pyrophosphate formed during P-Ser-HPr dephosphorylation by HPrK/P. Might play a role in controlling the intracellular pyrophosphate pool. This Bacillus pumilus (strain SAFR-032) protein is Pyrophosphatase PpaX.